Here is a 169-residue protein sequence, read N- to C-terminus: Adenine phosphoribosyltransferase (169 aa).

It belongs to the purine/pyrimidine phosphoribosyltransferase family. Homodimer.

Its subcellular location is the cytoplasm. It carries out the reaction AMP + diphosphate = 5-phospho-alpha-D-ribose 1-diphosphate + adenine. Its pathway is purine metabolism; AMP biosynthesis via salvage pathway; AMP from adenine: step 1/1. Catalyzes a salvage reaction resulting in the formation of AMP, that is energically less costly than de novo synthesis. The chain is Adenine phosphoribosyltransferase from Mycoplasmopsis synoviae (strain 53) (Mycoplasma synoviae).